A 283-amino-acid polypeptide reads, in one-letter code: uncharacterized protein (283 aa).

Positions 1-25 (MNKKRLLFRTPLDALFLLFGTALSA) are cleaved as a signal peptide. The N-palmitoyl cysteine moiety is linked to residue cysteine 26. Cysteine 26 is lipidated: S-diacylglycerol cysteine.

It belongs to the MG439/MG440 family.

The protein localises to the cell membrane. This is an uncharacterized protein from Mycoplasma pneumoniae (strain ATCC 29342 / M129 / Subtype 1) (Mycoplasmoides pneumoniae).